The sequence spans 361 residues: Spermatogenesis-associated protein 17 (361 aa).

IQ domains lie at glutamate 32–isoleucine 61, leucine 55–tyrosine 84, and tyrosine 91–tyrosine 120.

The protein resides in the cytoplasm. In Homo sapiens (Human), this protein is Spermatogenesis-associated protein 17 (SPATA17).